The following is a 303-amino-acid chain: Mesenteric estrogen-dependent adipogenesis protein (303 aa).

The protein resides in the cytoplasm. Functionally, involved in processes that promote adipocyte differentiation, lipid accumulation, and glucose uptake in mature adipocytes. This is Mesenteric estrogen-dependent adipogenesis protein (MEDAG) from Bos taurus (Bovine).